The following is a 610-amino-acid chain: L-galactono-1,4-lactone dehydrogenase, mitochondrial (610 aa).

A mitochondrion-targeting transit peptide spans 1-35 (MLRSLLLRRSVGHSLGTLSPSSSTIRSSFSPHRTL). The disordered stretch occupies residues 17-61 (TLSPSSSTIRSSFSPHRTLCTTGQTLTPPPPPPPRPPPPPPATAS). Low complexity predominate over residues 19–30 (SPSSSTIRSSFS). Residues 36-101 (CTTGQTLTPP…AKHKKAQIFR (66 aa)) constitute a propeptide, removed in mature form. Residues 43-58 (TPPPPPPPRPPPPPPA) are compositionally biased toward pro residues. Residues 68–84 (YAGYAALAIFSGVATYF) traverse the membrane as a helical segment. Positions 123–258 (TRNFNQPENL…TPAKGTIELS (136 aa)) constitute an FAD-binding PCMH-type domain.

It depends on FAD as a cofactor.

Its subcellular location is the mitochondrion membrane. The enzyme catalyses L-galactono-1,4-lactone + 4 Fe(III)-[cytochrome c] = L-dehydroascorbate + 4 Fe(II)-[cytochrome c] + 5 H(+). It carries out the reaction L-gulono-1,4-lactone + 2 Fe(III)-[cytochrome c] = L-ascorbate + 2 Fe(II)-[cytochrome c] + 3 H(+). The protein operates within cofactor biosynthesis; L-ascorbate biosynthesis. Involved in the biosynthesis of ascorbate. Catalyzes the final step of ascorbate biosynthesis. Uses L-galactono-1,4-lactone and L-gulono-1,4-lactone as substrates, but not D-galactono-1,4-lactone, D-gulono-1,4-lactone, L-mannono-1,4-lactone or D-galactonic acid. Also active with phenazine methosulfate and 1,4-benzoquinone as electron acceptors. Involved in the regulation of the accumulation of the mitochondrial respiratory complex I. Structural part of one of the plant-specific mitochondrial complex I assembly intermediates, lacking the whole distal (PD) module. Prevents the binding of the plant specific P1 protein (CPN60/HSP60), responsible for the linkage of the proximal (PP) to the distal (PD) module. The protein is L-galactono-1,4-lactone dehydrogenase, mitochondrial of Arabidopsis thaliana (Mouse-ear cress).